The primary structure comprises 250 residues: Beta-crystallin B1 (250 aa).

Residues 1–13 are compositionally biased toward polar residues; sequence MSQAAKASATTAV. The disordered stretch occupies residues 1–49; that stretch reads MSQAAKASATTAVNPGPDGKGKGAPSTGPAPAPGPTPVPASVPRPAAKV. Serine 2 carries the post-translational modification N-acetylserine. The interval 2–56 is N-terminal arm; it reads SQAAKASATTAVNPGPDGKGKGAPSTGPAPAPGPTPVPASVPRPAAKVGDLPPGS. Positions 28 to 42 are enriched in pro residues; that stretch reads GPAPAPGPTPVPASV. 2 consecutive Beta/gamma crystallin 'Greek key' domains span residues 57–96 and 97–141; these read YRLIVFEQENFQGRRVEFSGECLNLGDRGFDRVRSLIVVS and GPWV…RPIR. The segment at 142 to 146 is connecting peptide; that stretch reads MDSQE. Beta/gamma crystallin 'Greek key' domains lie at 147–188 and 189–231; these read HKIC…TVSG and GTWV…RRLR. Positions 233–250 are C-terminal arm; that stretch reads RQWHQEGCFPVLTAEPPK.

The protein belongs to the beta/gamma-crystallin family. In terms of assembly, homo/heterodimer, or complexes of higher-order. The structure of beta-crystallin oligomers seems to be stabilized through interactions between the N-terminal arms. Specific cleavages in the N-terminal arm occur during lens maturation and give rise to truncated forms, leading to impaired oligomerization and protein insolubilization. The protease responsible for this partial degradation could be calpain II.

Its function is as follows. Crystallins are the dominant structural components of the vertebrate eye lens. The protein is Beta-crystallin B1 (Crybb1) of Mus musculus (Mouse).